The following is a 989-amino-acid chain: MESFRQIKNNNVDLISNNDPLDKNRLLIEDLWESVLREECPDDQAERLIQLKELSYSKQMNGDSSKTFKNEIVDIVNSMDLAESIAAARAFSLYFQLVNILEQRVEEDRYIQSFTNKDVQKSHDNLDPFAPALARQNAPVTFRELFYRLRKLNVPPGKLEELLQEMDIRLVFTAHPTEIVRHTIRHKQTRVANLLKKIQIEQFLTKEEKNSLKNQLKEEVRLWWRTDELHQFKPSVLDEVDYALHYFQQVLFNAMPQLRGRIAEALTENYPDVQLPSQSFCNFGSWVGSDRDGNPSVTPEITWRTACYQRQLMLERYIIATSNLRDQLSVSMQWSQVSSSLLESLETDRVKFPEIYEARATRYRSEPYRLKLSYILEKLRLTQERNNLLSDNGWKFDLEGEIDNKNLDKVENLYYKSVNEFTYDLELIKNSLISTGLTCESVNTLLTQVHIFGFSLASLDIRQESTRHSDAIQELTNYLDLTMKYDQMSEEEKIKWLIDELNTKRPLIPSDVNWTKTTEETFSVFKMVKRLQQEFGSRICHSYVISMSHSASDLLEVLLLAKEMGLLDQNSQKSKLLVVPLFETVEDLKRAPEVMERLFKLDFYRSLLPKVGESFKPLQELMLGYSDSNKDSGFVSSNWEIHRAQIALQNLSSRNNILLRLFHGRGGSVGRGGGPAYQAILAQPSGTLKGRIKITEQGEVLASKYSLPELALYNLETVTTAVIQNSLVNNRLDATPEWNQLMSRLAETSRSHYRKLVHENPDLLNFFQEVTPIEEISKLQISSRPARRKKGAKDLSSLRAIPWVFGWTQSRFLLPSWFGVGTALSSELNSDPRQIELLRVLHQRWPFFRMLISKVEMTLSKVDLEVARYYVDTLGSRENKDSFDDIFEVISKEYNLTKSLILEITGKNKLLESDRDLKLSVSLRNKTIIPLGFLQVSLLRRLRDQTRQPPISEFIIDKDESRRAYSRSELLRGALLTINGIAAGMRNTG.

Residues His-175 and Lys-630 contribute to the active site.

The protein belongs to the PEPCase type 1 family. Requires Mg(2+) as cofactor.

The enzyme catalyses oxaloacetate + phosphate = phosphoenolpyruvate + hydrogencarbonate. Functionally, forms oxaloacetate, a four-carbon dicarboxylic acid source for the tricarboxylic acid cycle. The chain is Phosphoenolpyruvate carboxylase from Prochlorococcus marinus (strain MIT 9215).